We begin with the raw amino-acid sequence, 310 residues long: D-alanine--D-alanine ligase (310 aa).

One can recognise an ATP-grasp domain in the interval 107–302 (KQAFQAARLT…FEDLVERILA (196 aa)). An ATP-binding site is contributed by 135–188 (EFSLPVVVKPSQEGSSVGVSIVKKESEFAAAMKEAFRYDREILVEQFIKGSEVQ). Mg(2+) is bound by residues Asp256, Glu269, and Asn271.

Belongs to the D-alanine--D-alanine ligase family. It depends on Mg(2+) as a cofactor. Requires Mn(2+) as cofactor.

Its subcellular location is the cytoplasm. It carries out the reaction 2 D-alanine + ATP = D-alanyl-D-alanine + ADP + phosphate + H(+). It functions in the pathway cell wall biogenesis; peptidoglycan biosynthesis. Cell wall formation. The sequence is that of D-alanine--D-alanine ligase from Geotalea uraniireducens (strain Rf4) (Geobacter uraniireducens).